Reading from the N-terminus, the 303-residue chain is Suppressor of silencing P0 (303 aa).

Belongs to the polerovirus P0 protein family.

Its function is as follows. Suppressor of RNA-mediated gene silencing. The protein is Suppressor of silencing P0 of Pea enation mosaic virus-1 (strain WSG) (PEMV-1).